The primary structure comprises 266 residues: Exosome complex component Rrp42 (266 aa).

Belongs to the RNase PH family. Rrp42 subfamily. In terms of assembly, component of the archaeal exosome complex. Forms a hexameric ring-like arrangement composed of 3 Rrp41-Rrp42 heterodimers. The hexameric ring associates with a trimer of Rrp4 and/or Csl4 subunits.

The protein resides in the cytoplasm. In terms of biological role, non-catalytic component of the exosome, which is a complex involved in RNA degradation. Contributes to the structuring of the Rrp41 active site. The sequence is that of Exosome complex component Rrp42 from Methanosarcina acetivorans (strain ATCC 35395 / DSM 2834 / JCM 12185 / C2A).